We begin with the raw amino-acid sequence, 528 residues long: Calcium-dependent protein kinase 13 (528 aa).

Residue Gly-2 is the site of N-myristoyl glycine attachment. The span at 17–32 shows a compositional bias: basic and acidic residues; the sequence is KSNYSGHDHARKDAAG. The tract at residues 17–37 is disordered; it reads KSNYSGHDHARKDAAGGKKSA. Ser-43 carries the post-translational modification Phosphoserine. Residues 54 to 312 form the Protein kinase domain; that stretch reads YLLDRELGRG…AKQVLEHPWI (259 aa). ATP contacts are provided by residues 60 to 68 and Lys-83; that span reads LGRGEFGVT. Asp-178 serves as the catalytic Proton acceptor. Ser-218 is subject to Phosphoserine. An autoinhibitory domain region spans residues 318–348; the sequence is APNVPLGDVVKSRLKQFSVMNRFKRKALRVI. EF-hand domains are found at residues 355-390, 391-426, 427-462, and 463-498; these read EEVE…FSTQ, LAES…LQKV, ANDE…DGGD, and DCVD…GTDW. 16 residues coordinate Ca(2+): Asp-368, Asp-370, Asp-372, Glu-379, Asp-404, Thr-410, Glu-415, Asp-440, Asp-442, Asn-444, Tyr-446, Glu-451, Asp-476, Asp-478, Asp-480, and Arg-482. Ser-484 carries the phosphoserine modification. Glu-487 lines the Ca(2+) pocket. At Ser-522 the chain carries Phosphoserine.

The protein belongs to the protein kinase superfamily. Ser/Thr protein kinase family. CDPK subfamily.

The protein localises to the cell membrane. The enzyme catalyses L-seryl-[protein] + ATP = O-phospho-L-seryl-[protein] + ADP + H(+). It carries out the reaction L-threonyl-[protein] + ATP = O-phospho-L-threonyl-[protein] + ADP + H(+). With respect to regulation, activated by calcium. Autophosphorylation may play an important role in the regulation of the kinase activity. Its function is as follows. May play a role in signal transduction pathways that involve calcium as a second messenger. This is Calcium-dependent protein kinase 13 (CPK13) from Arabidopsis thaliana (Mouse-ear cress).